A 255-amino-acid chain; its full sequence is Ribosomal RNA small subunit methyltransferase J (255 aa).

S-adenosyl-L-methionine contacts are provided by residues R107 to D108, E123 to R124, and D178. A disordered region spans residues A228–T247.

This sequence belongs to the methyltransferase superfamily. RsmJ family.

Its subcellular location is the cytoplasm. It carries out the reaction guanosine(1516) in 16S rRNA + S-adenosyl-L-methionine = N(2)-methylguanosine(1516) in 16S rRNA + S-adenosyl-L-homocysteine + H(+). Its function is as follows. Specifically methylates the guanosine in position 1516 of 16S rRNA. In Thioalkalivibrio sulfidiphilus (strain HL-EbGR7), this protein is Ribosomal RNA small subunit methyltransferase J.